A 201-amino-acid polypeptide reads, in one-letter code: 3-isopropylmalate dehydratase small subunit (201 aa).

It belongs to the LeuD family. LeuD type 1 subfamily. As to quaternary structure, heterodimer of LeuC and LeuD.

The enzyme catalyses (2R,3S)-3-isopropylmalate = (2S)-2-isopropylmalate. It functions in the pathway amino-acid biosynthesis; L-leucine biosynthesis; L-leucine from 3-methyl-2-oxobutanoate: step 2/4. In terms of biological role, catalyzes the isomerization between 2-isopropylmalate and 3-isopropylmalate, via the formation of 2-isopropylmaleate. This is 3-isopropylmalate dehydratase small subunit from Paramagnetospirillum magneticum (strain ATCC 700264 / AMB-1) (Magnetospirillum magneticum).